The chain runs to 363 residues: UDP-N-acetylglucosamine--N-acetylmuramyl-(pentapeptide) pyrophosphoryl-undecaprenol N-acetylglucosamine transferase (363 aa).

Residues 13–15, Asn-125, Arg-166, Ser-195, Ile-249, 268–273, and Gln-294 each bind UDP-N-acetyl-alpha-D-glucosamine; these read TGG and ALTVSE.

Belongs to the glycosyltransferase 28 family. MurG subfamily.

Its subcellular location is the cell inner membrane. The catalysed reaction is di-trans,octa-cis-undecaprenyl diphospho-N-acetyl-alpha-D-muramoyl-L-alanyl-D-glutamyl-meso-2,6-diaminopimeloyl-D-alanyl-D-alanine + UDP-N-acetyl-alpha-D-glucosamine = di-trans,octa-cis-undecaprenyl diphospho-[N-acetyl-alpha-D-glucosaminyl-(1-&gt;4)]-N-acetyl-alpha-D-muramoyl-L-alanyl-D-glutamyl-meso-2,6-diaminopimeloyl-D-alanyl-D-alanine + UDP + H(+). The protein operates within cell wall biogenesis; peptidoglycan biosynthesis. Its function is as follows. Cell wall formation. Catalyzes the transfer of a GlcNAc subunit on undecaprenyl-pyrophosphoryl-MurNAc-pentapeptide (lipid intermediate I) to form undecaprenyl-pyrophosphoryl-MurNAc-(pentapeptide)GlcNAc (lipid intermediate II). The polypeptide is UDP-N-acetylglucosamine--N-acetylmuramyl-(pentapeptide) pyrophosphoryl-undecaprenol N-acetylglucosamine transferase (Cellvibrio japonicus (strain Ueda107) (Pseudomonas fluorescens subsp. cellulosa)).